A 155-amino-acid chain; its full sequence is DNA gyrase inhibitor (155 aa).

Belongs to the DNA gyrase inhibitor family. As to quaternary structure, interacts with DNA gyrase.

Its subcellular location is the cytoplasm. In terms of biological role, inhibits the supercoiling activity of DNA gyrase. Acts by inhibiting DNA gyrase at an early step, prior to (or at the step of) binding of DNA by the gyrase. It protects cells against toxins that target DNA gyrase, by inhibiting activity of these toxins and reducing the formation of lethal double-strand breaks in the cell. In Edwardsiella piscicida, this protein is DNA gyrase inhibitor.